The primary structure comprises 466 residues: Glutamate--tRNA ligase 1 (466 aa).

The 'HIGH' region motif lies at 9–19 (PSPTGYLHIGG). Residues Cys-98, Cys-100, Cys-125, and Glu-127 each coordinate Zn(2+). The 'KMSKS' region signature appears at 236 to 240 (KLSKR). Lys-239 contributes to the ATP binding site.

Belongs to the class-I aminoacyl-tRNA synthetase family. Glutamate--tRNA ligase type 1 subfamily. In terms of assembly, monomer. It depends on Zn(2+) as a cofactor.

The protein resides in the cytoplasm. It catalyses the reaction tRNA(Glu) + L-glutamate + ATP = L-glutamyl-tRNA(Glu) + AMP + diphosphate. Its function is as follows. Catalyzes the attachment of glutamate to tRNA(Glu) in a two-step reaction: glutamate is first activated by ATP to form Glu-AMP and then transferred to the acceptor end of tRNA(Glu). The chain is Glutamate--tRNA ligase 1 from Acidithiobacillus ferrooxidans (strain ATCC 53993 / BNL-5-31) (Leptospirillum ferrooxidans (ATCC 53993)).